Here is a 333-residue protein sequence, read N- to C-terminus: MKRRQKRKHLEIEESKEAGISKSQEDISHPESTGVPKAQSPGVGEVSSASEYFSCVSSPQKLIHRSKGTWKLLQDSSKPRSPLDQVPEGEATTAPSQQASSSCPSYKTCVSSLCMNKEERGMKIYYMQVQMKKGVAISWDTKETSESLEKQPRMEEATLPEGVWVGTPPSDVSTRNLLSDSEPIGEEKEHEEKPESDSPPGSPAVEERPRAKTPDWLVTMENGFRCMACCRVFATMESLQEHVQYGIREGFSCHVFHLTMAQLIGSMESESTQEEEEDHTEETEKPKEEKAEEQQPTEEDVGMKKPWSQCPGCVFDSPKDRRRRKDHCDNSGS.

3 disordered regions span residues Met-1–Glu-45, Leu-73–Lys-107, and Glu-143–Pro-214. Basic and acidic residues predominate over residues Leu-10–His-29. The segment covering Thr-92 to Ser-105 has biased composition (low complexity). A compositionally biased stretch (basic and acidic residues) spans Glu-143 to Glu-156. Residues Ser-170 to Ser-179 show a composition bias toward polar residues. Basic and acidic residues predominate over residues Gly-185–Ser-196. Thr-213 carries the phosphothreonine modification. Residues Phe-224–Arg-248 form a C2H2-type; degenerate zinc finger. The disordered stretch occupies residues Met-267 to Ser-333. Acidic residues predominate over residues Ser-271 to Glu-281. The span at Glu-282–Glu-293 shows a compositional bias: basic and acidic residues. Ser-308 bears the Phosphoserine mark.

This sequence belongs to the FAM170 family. As to expression, testis-specific.

The protein resides in the nucleus. Acts as a nuclear transcription factor that positively regulates the expression of heat shock genes. Binds to heat shock promoter elements (HSE). In Mus musculus (Mouse), this protein is Protein FAM170A (Fam170a).